The sequence spans 333 residues: Holliday junction branch migration complex subunit RuvB (333 aa).

Positions 1–182 (MDERLLSGES…FGVLSRLEYY (182 aa)) are large ATPase domain (RuvB-L). Residues leucine 21, arginine 22, glycine 63, lysine 66, threonine 67, threonine 68, 129–131 (EDF), arginine 172, tyrosine 182, and arginine 219 each bind ATP. Position 67 (threonine 67) interacts with Mg(2+). The interval 183–253 (TVDQLSAIVE…ITQMALELLQ (71 aa)) is small ATPAse domain (RuvB-S). The interval 256–333 (KLGLDHIDHK…EHFGMEMPKV (78 aa)) is head domain (RuvB-H). The DNA site is built by arginine 311 and arginine 316.

This sequence belongs to the RuvB family. Homohexamer. Forms an RuvA(8)-RuvB(12)-Holliday junction (HJ) complex. HJ DNA is sandwiched between 2 RuvA tetramers; dsDNA enters through RuvA and exits via RuvB. An RuvB hexamer assembles on each DNA strand where it exits the tetramer. Each RuvB hexamer is contacted by two RuvA subunits (via domain III) on 2 adjacent RuvB subunits; this complex drives branch migration. In the full resolvosome a probable DNA-RuvA(4)-RuvB(12)-RuvC(2) complex forms which resolves the HJ.

The protein localises to the cytoplasm. The catalysed reaction is ATP + H2O = ADP + phosphate + H(+). Functionally, the RuvA-RuvB-RuvC complex processes Holliday junction (HJ) DNA during genetic recombination and DNA repair, while the RuvA-RuvB complex plays an important role in the rescue of blocked DNA replication forks via replication fork reversal (RFR). RuvA specifically binds to HJ cruciform DNA, conferring on it an open structure. The RuvB hexamer acts as an ATP-dependent pump, pulling dsDNA into and through the RuvAB complex. RuvB forms 2 homohexamers on either side of HJ DNA bound by 1 or 2 RuvA tetramers; 4 subunits per hexamer contact DNA at a time. Coordinated motions by a converter formed by DNA-disengaged RuvB subunits stimulates ATP hydrolysis and nucleotide exchange. Immobilization of the converter enables RuvB to convert the ATP-contained energy into a lever motion, pulling 2 nucleotides of DNA out of the RuvA tetramer per ATP hydrolyzed, thus driving DNA branch migration. The RuvB motors rotate together with the DNA substrate, which together with the progressing nucleotide cycle form the mechanistic basis for DNA recombination by continuous HJ branch migration. Branch migration allows RuvC to scan DNA until it finds its consensus sequence, where it cleaves and resolves cruciform DNA. The sequence is that of Holliday junction branch migration complex subunit RuvB from Bacillus cereus (strain 03BB102).